Consider the following 572-residue polypeptide: 2-succinyl-5-enolpyruvyl-6-hydroxy-3-cyclohexene-1-carboxylate synthase (572 aa).

It belongs to the TPP enzyme family. MenD subfamily. As to quaternary structure, homodimer. Mg(2+) serves as cofactor. Requires Mn(2+) as cofactor. Thiamine diphosphate is required as a cofactor.

It carries out the reaction isochorismate + 2-oxoglutarate + H(+) = 5-enolpyruvoyl-6-hydroxy-2-succinyl-cyclohex-3-ene-1-carboxylate + CO2. It participates in quinol/quinone metabolism; 1,4-dihydroxy-2-naphthoate biosynthesis; 1,4-dihydroxy-2-naphthoate from chorismate: step 2/7. The protein operates within quinol/quinone metabolism; menaquinone biosynthesis. Catalyzes the thiamine diphosphate-dependent decarboxylation of 2-oxoglutarate and the subsequent addition of the resulting succinic semialdehyde-thiamine pyrophosphate anion to isochorismate to yield 2-succinyl-5-enolpyruvyl-6-hydroxy-3-cyclohexene-1-carboxylate (SEPHCHC). The protein is 2-succinyl-5-enolpyruvyl-6-hydroxy-3-cyclohexene-1-carboxylate synthase of Vibrio campbellii (strain ATCC BAA-1116).